The sequence spans 462 residues: Cysteine--tRNA ligase (462 aa).

A Zn(2+)-binding site is contributed by C24. A 'HIGH' region motif is present at residues 26–36; sequence PTVYDDAHLGH. 3 residues coordinate Zn(2+): C199, H224, and E228. A 'KMSKS' region motif is present at residues 256-260; it reads KMSKS. Residue K259 participates in ATP binding.

The protein belongs to the class-I aminoacyl-tRNA synthetase family. Monomer. Zn(2+) is required as a cofactor.

The protein localises to the cytoplasm. The enzyme catalyses tRNA(Cys) + L-cysteine + ATP = L-cysteinyl-tRNA(Cys) + AMP + diphosphate. In Campylobacter jejuni subsp. jejuni serotype O:2 (strain ATCC 700819 / NCTC 11168), this protein is Cysteine--tRNA ligase (cysS).